A 37-amino-acid chain; its full sequence is Cytochrome b6-f complex subunit 5 (37 aa).

Residues 5-25 (ILLGIVLGMVLVTLAGLFVAA) form a helical membrane-spanning segment.

This sequence belongs to the PetG family. In terms of assembly, the 4 large subunits of the cytochrome b6-f complex are cytochrome b6, subunit IV (17 kDa polypeptide, PetD), cytochrome f and the Rieske protein, while the 4 small subunits are PetG, PetL, PetM and PetN. The complex functions as a dimer.

The protein localises to the cellular thylakoid membrane. In terms of biological role, component of the cytochrome b6-f complex, which mediates electron transfer between photosystem II (PSII) and photosystem I (PSI), cyclic electron flow around PSI, and state transitions. PetG is required for either the stability or assembly of the cytochrome b6-f complex. This Synechococcus sp. (strain JA-3-3Ab) (Cyanobacteria bacterium Yellowstone A-Prime) protein is Cytochrome b6-f complex subunit 5.